The sequence spans 301 residues: Ribonuclease HIII (301 aa).

The 214-residue stretch at 88–301 (RPRIGVDESG…TFYEVLGSTS (214 aa)) folds into the RNase H type-2 domain. A divalent metal cation contacts are provided by D94, E95, and D198.

Belongs to the RNase HII family. RnhC subfamily. It depends on Mn(2+) as a cofactor. Mg(2+) is required as a cofactor.

It localises to the cytoplasm. The catalysed reaction is Endonucleolytic cleavage to 5'-phosphomonoester.. Endonuclease that specifically degrades the RNA of RNA-DNA hybrids. This Chlamydia muridarum (strain MoPn / Nigg) protein is Ribonuclease HIII (rnhC).